Consider the following 750-residue polypeptide: MSDRYELFLTCPKGLEGLLAEEATALGLQETREHTSAIRGSADMETAYRLCLWSRLANRVLLVLKRFPMKDAEDLYHGVLDVEWQDHLESDGTIAVEFSGHGSGIDNTHFGALKVKDAIVDKLRTPDGERPSVDKINPDLRVHLRLDRGEAILSLDLSGHSLHQRGYRLQQGAAPLKENLAAAILIRAGWPRIAAEGGALADPMCGVGTFLVEAGMIAADIAPNIKRERWGFSAWLGHVPALWRKLHDEALARAEAGLAKTPSWIRGYEADPRLIQPGRNNIERAGLSDWIKVYQGEVATFEPRPDQNQKGLVICNPPYGERLGDEASLLYLYQNLGERLRQACLNWEAAVFTGAPDLGKRMGIRSHKQYSFWNGALPCKLLLIKVTPDQFVTGERRTPEQRQIERENPVEVEVVERKLNKNGNPIKPEPVVVEQARLSEGGQMFANRLQKNLKLMGKWVRREGIDRYRVYDADMPEYSLAIDLYHDWVHVQEYAAPKSIDPEKASARLFDALAAIPQALNIDKNRVVIKRRERQSGTKQYERQSAQGQFLEVSEGGVKLLVNLTDYLDTGLFLDHRPMRMRIQREASGKRFLNLFAYTATASVHAAKGGARSTTSIDLSRTYLDWARRNLSLNGFSDKNRLEQGDVMAWLQANRDEYDLIFIDPPTFSNSKRMEGIFDVQRDQVELIDLAMARLAPGGVLYFSNNFRKFVLDENLSQRYAVEDITAQTIDQDFARNGKIHRAWKIMARA.

The THUMP domain maps to 46-157 (TAYRLCLWSR…RGEAILSLDL (112 aa)).

The protein belongs to the methyltransferase superfamily. RlmKL family.

The protein resides in the cytoplasm. The enzyme catalyses guanosine(2445) in 23S rRNA + S-adenosyl-L-methionine = N(2)-methylguanosine(2445) in 23S rRNA + S-adenosyl-L-homocysteine + H(+). The catalysed reaction is guanosine(2069) in 23S rRNA + S-adenosyl-L-methionine = N(2)-methylguanosine(2069) in 23S rRNA + S-adenosyl-L-homocysteine + H(+). In terms of biological role, specifically methylates the guanine in position 2445 (m2G2445) and the guanine in position 2069 (m7G2069) of 23S rRNA. The sequence is that of Ribosomal RNA large subunit methyltransferase K/L from Pseudomonas savastanoi pv. phaseolicola (strain 1448A / Race 6) (Pseudomonas syringae pv. phaseolicola (strain 1448A / Race 6)).